The following is a 286-amino-acid chain: Phospholipase A1 (286 aa).

Residues 1 to 20 form the signal peptide; sequence MRISLACLAALCALPAGVMA. Topologically, residues 21–49 are periplasmic; sequence QDASVHDKPAVRGSIIANLLQDHDNPFLL. The beta stranded transmembrane segment at 50-62 threads the bilayer; that stretch reads YPYESNYLLYTWT. Residues 63-81 are Extracellular-facing; it reads SDLNKEAIRSYDWAENARK. A beta stranded membrane pass occupies residues 82–96; the sequence is DEVKFQLSLAFPLWR. Residues 97 to 102 are Periplasmic-facing; sequence GILGDN. Residues 103 to 115 traverse the membrane as a beta stranded segment; the sequence is SLLGASYTQKSWW. Over 116–125 the chain is Extracellular; sequence QLSNSKESAP. Ca(2+) is bound at residue Ser123. Residues 126 to 145 traverse the membrane as a beta stranded segment; the sequence is FRETNYEPQLFLGFATDYQF. The Periplasmic segment spans residues 146–147; the sequence is AG. Residues 148–161 form a beta stranded membrane-spanning segment; that stretch reads WTLRDIEMGYNHDS. The active-site Proton acceptor is His159. Ser161 acts as the Nucleophile in catalysis. Topologically, residues 162–170 are extracellular; that stretch reads NGRSDPTSR. Residues Arg164 and Ser169 each coordinate Ca(2+). Residues 171-183 traverse the membrane as a beta stranded segment; the sequence is SWNRLYARLMAQN. Residues 184-185 lie on the Periplasmic side of the membrane; that stretch reads GN. A beta stranded membrane pass occupies residues 186 to 195; it reads WLVEVKPWYV. Over 196 to 213 the chain is Extracellular; it reads VGSTDDNPDITKYMGYYR. Asp201 provides a ligand contact to Ca(2+). Residues 214-220 traverse the membrane as a beta stranded segment; the sequence is LKVGYQL. At 221-222 the chain is on the periplasmic side; sequence GE. A beta stranded membrane pass occupies residues 223-231; it reads AILSAQGQY. Residues 232–238 lie on the Extracellular side of the membrane; that stretch reads NWNTGYG. Residues 239–247 traverse the membrane as a beta stranded segment; sequence GAELGVSYP. Residues 248–252 are Periplasmic-facing; that stretch reads ITKHV. Residues 253–262 form a beta stranded membrane-spanning segment; it reads RAYTQIYSGY. Residues 263 to 271 lie on the Extracellular side of the membrane; that stretch reads GESLIDYNF. Residues 272–283 traverse the membrane as a beta stranded segment; the sequence is NQTRVGVGLMLN. Residues 284-286 are Periplasmic-facing; that stretch reads DLF.

The protein belongs to the phospholipase A1 family. In terms of assembly, homodimer; dimerization is reversible, and the dimeric form is the active one. It depends on Ca(2+) as a cofactor.

The protein localises to the cell outer membrane. It catalyses the reaction a 1,2-diacyl-sn-glycero-3-phosphocholine + H2O = a 2-acyl-sn-glycero-3-phosphocholine + a fatty acid + H(+). It carries out the reaction a 1,2-diacyl-sn-glycero-3-phosphocholine + H2O = a 1-acyl-sn-glycero-3-phosphocholine + a fatty acid + H(+). Hydrolysis of phosphatidylcholine with phospholipase A2 (EC 3.1.1.4) and phospholipase A1 (EC 3.1.1.32) activities. The protein is Phospholipase A1 (pldA) of Klebsiella pneumoniae.